A 480-amino-acid chain; its full sequence is Endothelial transcription factor GATA-2 (480 aa).

The residue at position 73 (Ser73) is a Phosphoserine. Arg86 carries the asymmetric dimethylarginine modification. A disordered region spans residues Ser166 to Lys208. Positions Pro183 to Ser201 are enriched in low complexity. A Phosphoserine modification is found at Ser192. 2 GATA-type zinc fingers span residues Cys295–Cys319 and Cys349–Cys373. Lys389 is covalently cross-linked (Glycyl lysine isopeptide (Lys-Gly) (interchain with G-Cter in SUMO2)). A disordered region spans residues Thr457–Gly480.

As to quaternary structure, interacts with BRD3. Interacts with AR and CCAR1. Interacts with MDFIC.

It localises to the nucleus. Functionally, transcriptional activator which regulates endothelin-1 gene expression in endothelial cells. Binds to the consensus sequence 5'-AGATAG-3'. The sequence is that of Endothelial transcription factor GATA-2 (Gata2) from Mus musculus (Mouse).